Here is a 341-residue protein sequence, read N- to C-terminus: MRVLGIETSCDETGVAIYDQHKGLLANEVYSQSELHADYGGVVPELAARDHVRKIVPLISCTLNRARLEPKNIDGIAYTAGPGLMGALLVGATVARTLAYAWKIPAIDIHHMEAHLLAPMLEKKVPTFPFIALLVSGGHTQLVSASNIGEYKILGESIDDAVGEVFDKIAILLGLKYPGGALLSKMAQKGISKRYVFPRPMIDRPGLNFSFSGLKTCTVNTIMSNSHDAQNCADIARAFEDAIIETLAIKCRRALNQTGLKCLVISGGVSANHALRSYLLKMMYTLQGSLFYPRPEFCTDNGAMVAYAGLIRLKAGLFSDLPILVRPRWSLEDLPRIKQSL.

Fe cation is bound by residues His111 and His115. Substrate contacts are provided by residues 134-138 (LVSGG), Asp167, Gly180, and Asn272. Asp300 is a Fe cation binding site.

It belongs to the KAE1 / TsaD family. Fe(2+) serves as cofactor.

It localises to the cytoplasm. It catalyses the reaction L-threonylcarbamoyladenylate + adenosine(37) in tRNA = N(6)-L-threonylcarbamoyladenosine(37) in tRNA + AMP + H(+). Required for the formation of a threonylcarbamoyl group on adenosine at position 37 (t(6)A37) in tRNAs that read codons beginning with adenine. Is involved in the transfer of the threonylcarbamoyl moiety of threonylcarbamoyl-AMP (TC-AMP) to the N6 group of A37, together with TsaE and TsaB. TsaD likely plays a direct catalytic role in this reaction. This Blochmanniella pennsylvanica (strain BPEN) protein is tRNA N6-adenosine threonylcarbamoyltransferase.